Reading from the N-terminus, the 109-residue chain is Large ribosomal subunit protein P1 (109 aa).

Residues A71–G109 are disordered. The span at A80–P95 shows a compositional bias: basic and acidic residues. 3 consecutive repeat copies span residues K81–P85, K86–P90, and K91–P95. A 3 X 5 AA tandem repeats of K-K-E-E-P region spans residues K81 to P95. The segment covering K96–G109 has biased composition (acidic residues).

It belongs to the eukaryotic ribosomal protein P1/P2 family. Not phosphorylated.

This chain is Large ribosomal subunit protein P1 (RPLP1), found in Tetrahymena thermophila.